We begin with the raw amino-acid sequence, 536 residues long: Trigger factor (536 aa).

One can recognise a PPIase FKBP-type domain in the interval 164–249 (GDQVIIDFAG…VKEVKVPAAT (86 aa)). The disordered stretch occupies residues 439–536 (IEADDDSGHV…APAKKAAAKK (98 aa)). Residues 472–502 (TKKEAVKDEAKAEEAPAKKAPAKKAEPKAEA) show a composition bias toward basic and acidic residues. A compositionally biased stretch (low complexity) spans 503–515 (KPAAAKKAAPAKA). Positions 516-525 (AAEEKAEPAK) are enriched in basic and acidic residues. Basic residues predominate over residues 527–536 (APAKKAAAKK).

The protein belongs to the FKBP-type PPIase family. Tig subfamily.

Its subcellular location is the cytoplasm. It carries out the reaction [protein]-peptidylproline (omega=180) = [protein]-peptidylproline (omega=0). Functionally, involved in protein export. Acts as a chaperone by maintaining the newly synthesized protein in an open conformation. Functions as a peptidyl-prolyl cis-trans isomerase. In Sphingopyxis alaskensis (strain DSM 13593 / LMG 18877 / RB2256) (Sphingomonas alaskensis), this protein is Trigger factor.